The primary structure comprises 587 residues: Putative adenylate cyclase 3 (587 aa).

A Guanylate cyclase domain is found at 12-127 (AILAADAVGY…DGVNVAARIE (116 aa)). TPR repeat units lie at residues 343–376 (LLVR…DPGM), 421–454 (PQGH…DPNS), 455–488 (ANAY…DPQF), 490–522 (LSLH…APRS), and 524–556 (MTRF…NPSF).

Belongs to the adenylyl cyclase class-3 family.

The enzyme catalyses ATP = 3',5'-cyclic AMP + diphosphate. The polypeptide is Putative adenylate cyclase 3 (cya3) (Rhizobium meliloti (strain 1021) (Ensifer meliloti)).